We begin with the raw amino-acid sequence, 1069 residues long: Leucine--tRNA ligase (1069 aa).

The interval 19–53 (TAEHGTGAANATASPSGAVPPSGATATAGTGDEPG) is disordered. Positions 107–118 (PYPSGTGLHVGH) match the 'HIGH' region motif. Residues 823-836 (GRFTHHGAPVDRRS) are compositionally biased toward basic and acidic residues. The interval 823–846 (GRFTHHGAPVDRRSGKMGKSLKNS) is disordered. Residues 838-842 (KMGKS) carry the 'KMSKS' region motif. Lys-841 provides a ligand contact to ATP.

It belongs to the class-I aminoacyl-tRNA synthetase family.

The protein localises to the cytoplasm. The enzyme catalyses tRNA(Leu) + L-leucine + ATP = L-leucyl-tRNA(Leu) + AMP + diphosphate. This Frankia alni (strain DSM 45986 / CECT 9034 / ACN14a) protein is Leucine--tRNA ligase.